A 476-amino-acid polypeptide reads, in one-letter code: MADNSTSRFYTNLLIANYLKHNGLEDTLAAFIRETALPLSALEKSDSSNSNVGEIPLEDLQSVVEDRIYYKRRSFKDRFKTLSINDDLAPIDNAKYGIQPWNHSLKFSIDVKLNKSLPKDTLFISATFTEDSKYILLSSATGYLVIYDIEKATSKSFKINEKVKSIVKLYGPIGSSGYQYVCPMNGSFYLLNNDFELVNNAVWKIHARMITHIKICNVTESSWFVITSGMDNFLRLSLLEIKNGNTFLTKLSEIKLASNCTSLNVIANGDGNGQNSFSVFLTRAEYTHIACYSIIDAKNLVHSYNIALNNAEFSTYAFNIRDVMAVDYVHSNTKDTIGLSPSTMLVVATSHKPYMRLILVEIPMNTGHPKAMKLDKVQTYYDKILRNFATEIYQDDFSLPILGKLESSNGVLVGNDEGIYSVDLMTGDSRILNIPGEANSLHDRIKCMDISKDQMRMVAGTSTKSIYILNVIRNAQ.

Residues 7-39 (SRFYTNLLIANYLKHNGLEDTLAAFIRETALPL) form the LisH domain.

This is an uncharacterized protein from Saccharomyces cerevisiae (strain ATCC 204508 / S288c) (Baker's yeast).